We begin with the raw amino-acid sequence, 117 residues long: Large ribosomal subunit protein bL20c (117 aa).

This sequence belongs to the bacterial ribosomal protein bL20 family.

The protein resides in the plastid. The protein localises to the chloroplast. Its function is as follows. Binds directly to 23S ribosomal RNA and is necessary for the in vitro assembly process of the 50S ribosomal subunit. It is not involved in the protein synthesizing functions of that subunit. This Vitis vinifera (Grape) protein is Large ribosomal subunit protein bL20c.